We begin with the raw amino-acid sequence, 448 residues long: Probable D-serine dehydratase (448 aa).

At lysine 111 the chain carries N6-(pyridoxal phosphate)lysine.

It belongs to the serine/threonine dehydratase family. DsdA subfamily. Pyridoxal 5'-phosphate serves as cofactor.

The enzyme catalyses D-serine = pyruvate + NH4(+). This is Probable D-serine dehydratase from Rhizobium etli (strain CIAT 652).